The following is a 676-amino-acid chain: MEVENKLNRMTAAGLLIAIGIVYGDIGTSPLYVMKSVIAGNGGINTVGRDLIIGTISLILWTVTLLTTVQTVIIALRATNHGEGGIFALYALIRKKAAWLVWPALIGGAAILADGTLTPAVTVTSAIEGLKGLEFGKGNVPVSNQTTVLVITIVILLVLFSIQRMGTRIIGKAFGPIMLVWFAFLGVMGLINIGGNWWILQALNPYYAIKLLFSPYNKAGFAILGSIFLATTGAEALYSDVGHVGKGNIIGSWPFVFVCLSLNYFGQGVWILNNTNMHSATEINPFYAMIPENIRLASIVLATLAAIIASQALITGSFTLVAESINLKFLPRMNILYPSDERGQIYIPAVNKMLGITTIALVLFFRTSAHMEAAYGLSITISMLTTTILLYEWLVLKQGHNLANLLFVIFFSTINILFMGSSLSKFTHGGYVSLLITLLIASVMVVWYFGNKVRDQNVAGNAYVRLDEYTDMLTNLSHDDNYPTYSDNLVYMANVKYNKFIKREILYSILDKRPKRARAYWFVTVNVTNEPFTAEYAVNTFGTKNVINIQLYLGFKKQTSVNVYLRQIVHDLIKDNTIEAQPQEYTTTPGRDVGDFKFVIVNDVISPSTTLSSYKKWLVKARVQLQNLSLNPAQWFGLEFADMVIERVPLILGKQEPERIKRVAPVDYSKASLNKK.

The next 12 helical transmembrane spans lie at 14 to 34 (GLLIAIGIVYGDIGTSPLYVM), 56 to 76 (ISLILWTVTLLTTVQTVIIAL), 97 to 117 (AAWLVWPALIGGAAILADGTL), 142 to 162 (VSNQTTVLVITIVILLVLFSI), 173 to 193 (AFGPIMLVWFAFLGVMGLINI), 219 to 239 (AGFAILGSIFLATTGAEALYS), 252 to 272 (SWPFVFVCLSLNYFGQGVWIL), 296 to 316 (LASIVLATLAAIIASQALITG), 345 to 365 (IYIPAVNKMLGITTIALVLFF), 376 to 396 (GLSITISMLTTTILLYEWLVL), 402 to 422 (LANLLFVIFFSTINILFMGSS), and 429 to 449 (GGYVSLLITLLIASVMVVWYF).

This sequence belongs to the HAK/KUP transporter (TC 2.A.72) family.

Its subcellular location is the cell membrane. The enzyme catalyses K(+)(in) + H(+)(in) = K(+)(out) + H(+)(out). Functionally, transport of potassium into the cell. Likely operates as a K(+):H(+) symporter. The polypeptide is Probable potassium transport system protein Kup (Lactobacillus delbrueckii subsp. bulgaricus (strain ATCC BAA-365 / Lb-18)).